The following is a 397-amino-acid chain: Tryptophan synthase beta chain (397 aa).

Position 88 is an N6-(pyridoxal phosphate)lysine (lysine 88).

It belongs to the TrpB family. In terms of assembly, tetramer of two alpha and two beta chains. Pyridoxal 5'-phosphate is required as a cofactor.

The catalysed reaction is (1S,2R)-1-C-(indol-3-yl)glycerol 3-phosphate + L-serine = D-glyceraldehyde 3-phosphate + L-tryptophan + H2O. The protein operates within amino-acid biosynthesis; L-tryptophan biosynthesis; L-tryptophan from chorismate: step 5/5. Its function is as follows. The beta subunit is responsible for the synthesis of L-tryptophan from indole and L-serine. The chain is Tryptophan synthase beta chain from Haemophilus influenzae (strain PittEE).